The following is a 471-amino-acid chain: ATP synthase subunit beta (471 aa).

153–160 is an ATP binding site; sequence GGAGVGKT.

It belongs to the ATPase alpha/beta chains family. F-type ATPases have 2 components, CF(1) - the catalytic core - and CF(0) - the membrane proton channel. CF(1) has five subunits: alpha(3), beta(3), gamma(1), delta(1), epsilon(1). CF(0) has three main subunits: a(1), b(2) and c(9-12). The alpha and beta chains form an alternating ring which encloses part of the gamma chain. CF(1) is attached to CF(0) by a central stalk formed by the gamma and epsilon chains, while a peripheral stalk is formed by the delta and b chains.

The protein localises to the cell inner membrane. It carries out the reaction ATP + H2O + 4 H(+)(in) = ADP + phosphate + 5 H(+)(out). Its function is as follows. Produces ATP from ADP in the presence of a proton gradient across the membrane. The catalytic sites are hosted primarily by the beta subunits. This chain is ATP synthase subunit beta, found in Verminephrobacter eiseniae (strain EF01-2).